A 48-amino-acid polypeptide reads, in one-letter code: QGAQCTAGPCCWPCKFLKEGTICRRARGDDLDDYCNGISADCPRNPYY.

At Gln-1 the chain carries Pyrrolidone carboxylic acid. Positions Gln-1–Tyr-48 constitute a Disintegrin domain. 3 disulfide bridges follow: Cys-5–Cys-11, Cys-10–Cys-35, and Cys-23–Cys-42. The short motif at Arg-27–Asp-29 is the Cell attachment site element.

It belongs to the venom metalloproteinase (M12B) family. P-II subfamily. P-IIa sub-subfamily. In terms of assembly, monomer (disintegrin). In terms of tissue distribution, expressed by the venom gland.

Its subcellular location is the secreted. In terms of biological role, inhibit human platelet aggregation induced by ADP, collagen, thrombin or the thromboxane analog U46619 in platelet suspension with IC(50) values of 66-267 nM. Acts by inhibiting fibrinogen interaction with platelet receptors GPIIb/GPIIIa (ITGA2B/ITGB3). It also inhibits angiogenesis in vivo and in vitro by blocking integrin alpha-V/beta-3 (ITGAV/ITGB3) of endothelial cells and by inducing apoptosis. This is Disintegrin accutin from Deinagkistrodon acutus (Hundred-pace snake).